Here is a 793-residue protein sequence, read N- to C-terminus: Sucrose synthase (793 aa).

The segment at 259–738 is GT-B glycosyltransferase; the sequence is MILNIAIISP…AIKRVTEKYS (480 aa).

Belongs to the glycosyltransferase 1 family. In terms of assembly, homotetramer.

It carries out the reaction an NDP-alpha-D-glucose + D-fructose = a ribonucleoside 5'-diphosphate + sucrose + H(+). Its function is as follows. Catalyzes the reversible conversion of sucrose and a nucleotide disphosphate (NDP) into fructose and NDP-glucose; although the reaction is freely reversible in vitro, the physiological reaction seems to be sucrose cleavage. Unlike characterized plant enzymes prefers ADP as a cosubstrate, whereas plants prefer UDP. Its preference for ADP over UDP suggests it may directly link sucrose and glycogen metabolism. The chain is Sucrose synthase from Melioribacter roseus (strain JCM 17771 / P3M-2).